A 200-amino-acid chain; its full sequence is ATP-dependent Clp protease proteolytic subunit (200 aa).

Ser-98 acts as the Nucleophile in catalysis. His-123 is a catalytic residue.

The protein belongs to the peptidase S14 family. In terms of assembly, fourteen ClpP subunits assemble into 2 heptameric rings which stack back to back to give a disk-like structure with a central cavity, resembling the structure of eukaryotic proteasomes.

Its subcellular location is the cytoplasm. The catalysed reaction is Hydrolysis of proteins to small peptides in the presence of ATP and magnesium. alpha-casein is the usual test substrate. In the absence of ATP, only oligopeptides shorter than five residues are hydrolyzed (such as succinyl-Leu-Tyr-|-NHMec, and Leu-Tyr-Leu-|-Tyr-Trp, in which cleavage of the -Tyr-|-Leu- and -Tyr-|-Trp bonds also occurs).. Functionally, cleaves peptides in various proteins in a process that requires ATP hydrolysis. Has a chymotrypsin-like activity. Plays a major role in the degradation of misfolded proteins. The chain is ATP-dependent Clp protease proteolytic subunit from Ehrlichia canis (strain Jake).